The following is a 499-amino-acid chain: Pyruvate kinase 1 (499 aa).

Arg-50 contacts substrate. Residues Asn-52, Ser-54, Asp-84, and Thr-85 each contribute to the K(+) site. 52–55 provides a ligand contact to ATP; the sequence is NFSH. Arg-91 provides a ligand contact to ATP. Residue Glu-241 participates in Mg(2+) binding. 3 residues coordinate substrate: Gly-264, Asp-265, and Thr-297. Asp-265 lines the Mg(2+) pocket.

It belongs to the pyruvate kinase family. As to quaternary structure, homotetramer. Mg(2+) is required as a cofactor. K(+) serves as cofactor.

The enzyme catalyses pyruvate + ATP = phosphoenolpyruvate + ADP + H(+). The protein operates within carbohydrate degradation; glycolysis; pyruvate from D-glyceraldehyde 3-phosphate: step 5/5. With respect to regulation, activated by fructose 2,6-bisphosphate, activated by the effector in a cooperative manner. The polypeptide is Pyruvate kinase 1 (PYK1) (Trypanosoma brucei brucei).